Here is a 360-residue protein sequence, read N- to C-terminus: Phospho-N-acetylmuramoyl-pentapeptide-transferase (360 aa).

Helical transmembrane passes span 27–47, 69–89, 93–113, 134–154, 168–188, 199–219, 239–259, 262–282, 288–308, and 337–357; these read GAFL…INVL, VGTP…STLM, WDNP…LIGF, LLLG…NHPA, VLLN…VGAA, GLAI…AYAV, ILIF…YNAP, AVFM…AIAI, LVLA…IIQV, and TIVI…LATL.

It belongs to the glycosyltransferase 4 family. MraY subfamily. The cofactor is Mg(2+).

The protein resides in the cell inner membrane. The enzyme catalyses UDP-N-acetyl-alpha-D-muramoyl-L-alanyl-gamma-D-glutamyl-meso-2,6-diaminopimeloyl-D-alanyl-D-alanine + di-trans,octa-cis-undecaprenyl phosphate = di-trans,octa-cis-undecaprenyl diphospho-N-acetyl-alpha-D-muramoyl-L-alanyl-D-glutamyl-meso-2,6-diaminopimeloyl-D-alanyl-D-alanine + UMP. Its pathway is cell wall biogenesis; peptidoglycan biosynthesis. Catalyzes the initial step of the lipid cycle reactions in the biosynthesis of the cell wall peptidoglycan: transfers peptidoglycan precursor phospho-MurNAc-pentapeptide from UDP-MurNAc-pentapeptide onto the lipid carrier undecaprenyl phosphate, yielding undecaprenyl-pyrophosphoryl-MurNAc-pentapeptide, known as lipid I. The sequence is that of Phospho-N-acetylmuramoyl-pentapeptide-transferase from Ruegeria sp. (strain TM1040) (Silicibacter sp.).